The sequence spans 865 residues: ABC transporter ATP-binding/permease protein Rv1747 (865 aa).

In terms of domain architecture, FHA 1 spans 29 to 78; sequence VVVGRDLRADVRVAHPLISRAHLLLRFDQGRWVAIDNGSLNGLYLNNRRV. Residues 104-205 form a disordered region; sequence GRHRGSAGRP…PAGARGGTEA (102 aa). The segment covering 135–156 has biased composition (low complexity); it reads PQTGTLGSGQLQQLPPATTRIP. Residue Thr-152 is modified to Phosphothreonine. A compositionally biased stretch (pro residues) spans 157 to 166; that stretch reads AAPPSGPQPR. At Thr-210 the chain carries Phosphothreonine. The region spanning 230 to 279 is the FHA 2 domain; sequence VRIGRANDNDIVIPEVLASRHHATLVPTPGGTEIRDNRSINGTFVNGARV. Residues 319-552 enclose the ABC transporter domain; sequence LDVRGVTWTI…VMGTTNWADI (234 aa). Position 352–359 (352–359) interacts with ATP; sequence GPSGAGKS. The ABC transmembrane type-2 domain occupies 596-810; the sequence is RQFSTIARRQ…TPARWGFAAS (215 aa). The next 6 helical transmembrane spans lie at 614–634, 652–672, 700–720, 740–760, 767–787, and 836–856; these read GYFV…MSVP, PGQI…ALTI, VCVY…IVLV, FVDV…LSAI, IMPL…GMIP, and SAWW…VGFV.

It in the central section; belongs to the ABC transporter superfamily. This sequence in the C-terminal section; belongs to the ABC-2 integral membrane protein family. As to quaternary structure, homodimer. Interacts with PknF. Phosphorylated by PknF. Can probably be phosphorylated in vivo by other kinases when PknF is missing.

It is found in the cell membrane. With respect to regulation, function is positively regulated by phosphorylation. Functionally, involved in the translocation of an unknown substrate across the membrane. Transmembrane domains (TMD) form a pore in the membrane and the ATP-binding domain (NBD) is responsible for energy generation. Required for virulence. In Mycobacterium tuberculosis (strain ATCC 25618 / H37Rv), this protein is ABC transporter ATP-binding/permease protein Rv1747.